Consider the following 128-residue polypeptide: Aspartate 1-decarboxylase (128 aa).

Catalysis depends on S25, which acts as the Schiff-base intermediate with substrate; via pyruvic acid. Residue S25 is modified to Pyruvic acid (Ser). Residue T57 participates in substrate binding. The active-site Proton donor is the Y58. Residue 73–75 (GSA) participates in substrate binding.

This sequence belongs to the PanD family. As to quaternary structure, heterooctamer of four alpha and four beta subunits. The cofactor is pyruvate. Post-translationally, is synthesized initially as an inactive proenzyme, which is activated by self-cleavage at a specific serine bond to produce a beta-subunit with a hydroxyl group at its C-terminus and an alpha-subunit with a pyruvoyl group at its N-terminus.

The protein resides in the cytoplasm. The catalysed reaction is L-aspartate + H(+) = beta-alanine + CO2. The protein operates within cofactor biosynthesis; (R)-pantothenate biosynthesis; beta-alanine from L-aspartate: step 1/1. Its function is as follows. Catalyzes the pyruvoyl-dependent decarboxylation of aspartate to produce beta-alanine. The protein is Aspartate 1-decarboxylase of Paraburkholderia phytofirmans (strain DSM 17436 / LMG 22146 / PsJN) (Burkholderia phytofirmans).